The sequence spans 107 residues: Circadian clock oscillator protein KaiB (107 aa).

This sequence belongs to the KaiB family. As to quaternary structure, may undergo a major conformational rearrangment; in the free state forms homooligomers. When bound to KaiC switches to a monomeric thioredoxin-fold (KaiB(fs)). The active oscillator complex is probably KaiC(6):KaiB(6).

Functionally, component of the KaiBC clock protein complex, which constitutes the main circadian regulator in cyanobacteria; it may modify the ATPase activity of KaiC. In terms of biological role, may be a metamorphic protein which reversibly switches between an inactive tetrameric fold and a rare, thioredoxin-like monomeric fold (KaiB(fs)). KaiB(fs) binds phospho-KaiC, and perhaps clock output effectors. The protein is Circadian clock oscillator protein KaiB of Prochlorococcus marinus (strain NATL2A).